We begin with the raw amino-acid sequence, 288 residues long: Lipoyl synthase (288 aa).

Residues cysteine 39, cysteine 44, cysteine 50, cysteine 65, cysteine 69, cysteine 72, and serine 276 each contribute to the [4Fe-4S] cluster site. Residues 51–265 (WGKGTATFMI…KETGLKKGFE (215 aa)) form the Radical SAM core domain.

It belongs to the radical SAM superfamily. Lipoyl synthase family. It depends on [4Fe-4S] cluster as a cofactor.

It localises to the cytoplasm. The enzyme catalyses [[Fe-S] cluster scaffold protein carrying a second [4Fe-4S](2+) cluster] + N(6)-octanoyl-L-lysyl-[protein] + 2 oxidized [2Fe-2S]-[ferredoxin] + 2 S-adenosyl-L-methionine + 4 H(+) = [[Fe-S] cluster scaffold protein] + N(6)-[(R)-dihydrolipoyl]-L-lysyl-[protein] + 4 Fe(3+) + 2 hydrogen sulfide + 2 5'-deoxyadenosine + 2 L-methionine + 2 reduced [2Fe-2S]-[ferredoxin]. It participates in protein modification; protein lipoylation via endogenous pathway; protein N(6)-(lipoyl)lysine from octanoyl-[acyl-carrier-protein]: step 2/2. In terms of biological role, catalyzes the radical-mediated insertion of two sulfur atoms into the C-6 and C-8 positions of the octanoyl moiety bound to the lipoyl domains of lipoate-dependent enzymes, thereby converting the octanoylated domains into lipoylated derivatives. The polypeptide is Lipoyl synthase (Bacteroides fragilis (strain ATCC 25285 / DSM 2151 / CCUG 4856 / JCM 11019 / LMG 10263 / NCTC 9343 / Onslow / VPI 2553 / EN-2)).